The primary structure comprises 209 residues: Protein GrpE (209 aa).

Basic and acidic residues-rich tracts occupy residues 1-16 (MKKSTKKESTHSKEES) and 34-44 (KAGEKTAEPEK). The disordered stretch occupies residues 1–61 (MKKSTKKEST…EKSPEAACRE (61 aa)).

This sequence belongs to the GrpE family. Homodimer.

The protein resides in the cytoplasm. In terms of biological role, participates actively in the response to hyperosmotic and heat shock by preventing the aggregation of stress-denatured proteins, in association with DnaK and GrpE. It is the nucleotide exchange factor for DnaK and may function as a thermosensor. Unfolded proteins bind initially to DnaJ; upon interaction with the DnaJ-bound protein, DnaK hydrolyzes its bound ATP, resulting in the formation of a stable complex. GrpE releases ADP from DnaK; ATP binding to DnaK triggers the release of the substrate protein, thus completing the reaction cycle. Several rounds of ATP-dependent interactions between DnaJ, DnaK and GrpE are required for fully efficient folding. The chain is Protein GrpE from Methanosarcina acetivorans (strain ATCC 35395 / DSM 2834 / JCM 12185 / C2A).